Consider the following 105-residue polypeptide: Large ribosomal subunit protein uL24 (105 aa).

This sequence belongs to the universal ribosomal protein uL24 family. As to quaternary structure, part of the 50S ribosomal subunit.

Functionally, one of two assembly initiator proteins, it binds directly to the 5'-end of the 23S rRNA, where it nucleates assembly of the 50S subunit. One of the proteins that surrounds the polypeptide exit tunnel on the outside of the subunit. The protein is Large ribosomal subunit protein uL24 of Cellvibrio japonicus (strain Ueda107) (Pseudomonas fluorescens subsp. cellulosa).